A 151-amino-acid chain; its full sequence is D-aminoacyl-tRNA deacylase (151 aa).

The Gly-cisPro motif, important for rejection of L-amino acids motif lies at Gly137 to Pro138.

It belongs to the DTD family. Homodimer.

Its subcellular location is the cytoplasm. The catalysed reaction is glycyl-tRNA(Ala) + H2O = tRNA(Ala) + glycine + H(+). The enzyme catalyses a D-aminoacyl-tRNA + H2O = a tRNA + a D-alpha-amino acid + H(+). An aminoacyl-tRNA editing enzyme that deacylates mischarged D-aminoacyl-tRNAs. Also deacylates mischarged glycyl-tRNA(Ala), protecting cells against glycine mischarging by AlaRS. Acts via tRNA-based rather than protein-based catalysis; rejects L-amino acids rather than detecting D-amino acids in the active site. By recycling D-aminoacyl-tRNA to D-amino acids and free tRNA molecules, this enzyme counteracts the toxicity associated with the formation of D-aminoacyl-tRNA entities in vivo and helps enforce protein L-homochirality. The protein is D-aminoacyl-tRNA deacylase of Protochlamydia amoebophila (strain UWE25).